Consider the following 274-residue polypeptide: HTH-type transcriptional regulator GadX (274 aa).

The HTH araC/xylS-type domain occupies 145–242; that stretch reads TRVCTVINNN…GMTPTEYQER (98 aa). DNA-binding regions (H-T-H motif) lie at residues 162-183 and 209-232; these read ARIA…REEE and IKRV…RNYY.

As to quaternary structure, homodimer.

Functionally, positively regulates the expression of about fifteen genes involved in acid resistance such as gadA, gadB and gadC. Depending on the conditions (growth phase and medium), can repress gadW. In Escherichia coli O157:H7, this protein is HTH-type transcriptional regulator GadX (gadX).